The following is a 190-amino-acid chain: Putative manganese efflux pump MntP (190 aa).

The next 6 helical transmembrane spans lie at 3–23 (FLQI…CSVV), 37–57 (LVLA…GWVI), 72–88 (HWIA…KMIW), 111–131 (IILG…LAFV), 138–158 (VALS…WIGH), and 164–184 (FGKW…ANIV).

This sequence belongs to the MntP (TC 9.B.29) family.

The protein localises to the cell membrane. Probably functions as a manganese efflux pump. This is Putative manganese efflux pump MntP from Corynebacterium glutamicum (strain R).